Here is a 282-residue protein sequence, read N- to C-terminus: tRNA uridine(34) hydroxylase (282 aa).

In terms of domain architecture, Rhodanese spans 128-222 (DGRPVVMLDT…YFEEVGGSHY (95 aa)). The active-site Cysteine persulfide intermediate is the Cys182.

This sequence belongs to the TrhO family.

It carries out the reaction uridine(34) in tRNA + AH2 + O2 = 5-hydroxyuridine(34) in tRNA + A + H2O. Catalyzes oxygen-dependent 5-hydroxyuridine (ho5U) modification at position 34 in tRNAs. In Cupriavidus metallidurans (strain ATCC 43123 / DSM 2839 / NBRC 102507 / CH34) (Ralstonia metallidurans), this protein is tRNA uridine(34) hydroxylase.